The chain runs to 86 residues: MAATSLTAPPSFSGLRASRAVVAMAGTGKGGAFTGEISVEQLKDIGRWVILGHSERIVVAYEPVWAIGTGKVATPDQAQEVHGLCR.

The Proton acceptor role is filled by glutamate 62.

The protein belongs to the triosephosphate isomerase family. In terms of assembly, homodimer.

The catalysed reaction is D-glyceraldehyde 3-phosphate = dihydroxyacetone phosphate. The protein operates within carbohydrate biosynthesis; gluconeogenesis. It functions in the pathway carbohydrate degradation; glycolysis; D-glyceraldehyde 3-phosphate from glycerone phosphate: step 1/1. This chain is Triosephosphate isomerase, found in Platanus orientalis (Oriental plane-tree).